Reading from the N-terminus, the 326-residue chain is Adenosine receptor A1 (326 aa).

The Extracellular segment spans residues 1-10 (MPPYISAFQA). Residues 11–33 (AYIGIEVLIALVSVPGNVLVIWA) form a helical membrane-spanning segment. The Cytoplasmic portion of the chain corresponds to 34-46 (VKVNQALRDATFC). Residues 47 to 69 (FIVSLAVADVAVGALVIPLAILI) form a helical membrane-spanning segment. Topologically, residues 70–80 (NIGPQTYFHTC) are extracellular. Cysteine 80 and cysteine 169 form a disulfide bridge. Residues 81–102 (LMVACPVLILTQSSILALLAIA) form a helical membrane-spanning segment. At 103-123 (VDRYLRVKIPLRYKTVVTQRR) the chain is on the cytoplasmic side. Residues 124–146 (AAVAIAGCWILSLVVGLTPMFGW) form a helical membrane-spanning segment. Topologically, residues 147-176 (NNLSVVEQDWRANGSVGEPVIKCEFEKVIS) are extracellular. 2 N-linked (GlcNAc...) asparagine glycosylation sites follow: asparagine 148 and asparagine 159. A helical transmembrane segment spans residues 177–201 (MEYMVYFNFFVWVLPPLLLMVLIYL). Over 202–235 (EVFYLIRKQLNKKVSASSGDPQKYYGKELKIAKS) the chain is Cytoplasmic. The helical transmembrane segment at 236–259 (LALILFLFALSWLPLHILNCITLF) threads the bilayer. Topologically, residues 260 to 267 (CPTCQKPS) are extracellular. The helical transmembrane segment at 268 to 292 (ILIYIAIFLTHGNSAMNPIVYAFRI) threads the bilayer. The Cytoplasmic portion of the chain corresponds to 293 to 326 (HKFRVTFLKIWNDHFRCQPKPPIDEDLPEEKAED). Residue cysteine 309 is the site of S-palmitoyl cysteine attachment.

This sequence belongs to the G-protein coupled receptor 1 family. In terms of tissue distribution, widely expressed in brain and spinal cord.

It is found in the cell membrane. Its function is as follows. Receptor for adenosine. The activity of this receptor is mediated by G proteins which inhibit adenylyl cyclase. The protein is Adenosine receptor A1 (Adora1) of Rattus norvegicus (Rat).